The chain runs to 250 residues: UPF0736 protein YjbA (250 aa).

It belongs to the UPF0736 family.

The chain is UPF0736 protein YjbA (yjbA) from Bacillus subtilis (strain 168).